Reading from the N-terminus, the 301-residue chain is Ornithine carbamoyltransferase (301 aa).

Carbamoyl phosphate-binding positions include 46 to 49 (STRT), Q73, R97, and 124 to 127 (HPCQ). Residues N154, D218, and 222-223 (SM) contribute to the L-ornithine site. Carbamoyl phosphate-binding positions include 258-259 (CL) and R286.

Belongs to the aspartate/ornithine carbamoyltransferase superfamily. OTCase family.

The protein resides in the cytoplasm. It catalyses the reaction carbamoyl phosphate + L-ornithine = L-citrulline + phosphate + H(+). Its pathway is amino-acid biosynthesis; L-arginine biosynthesis; L-arginine from L-ornithine and carbamoyl phosphate: step 1/3. In terms of biological role, reversibly catalyzes the transfer of the carbamoyl group from carbamoyl phosphate (CP) to the N(epsilon) atom of ornithine (ORN) to produce L-citrulline. The chain is Ornithine carbamoyltransferase (argF) from Methanothermobacter thermautotrophicus (strain ATCC 29096 / DSM 1053 / JCM 10044 / NBRC 100330 / Delta H) (Methanobacterium thermoautotrophicum).